We begin with the raw amino-acid sequence, 466 residues long: 5-hydroxytryptamine receptor (466 aa).

The interval 1–21 (MNASRLPGFNDTSQDQPYPTS) is disordered. At 1–66 (MNASRLPGFN…TSFVLMAVTS (66 aa)) the chain is on the extracellular side. N-linked (GlcNAc...) asparagine glycans are attached at residues Asn2, Asn10, Asn29, Asn41, Asn45, and Asn50. The segment covering 10 to 21 (NDTSQDQPYPTS) has biased composition (polar residues). Residues 67–89 (VVLALIILATIVGNVFVIAAIII) traverse the membrane as a helical segment. Topologically, residues 90–99 (ERNLQNVANY) are cytoplasmic. A helical transmembrane segment spans residues 100 to 121 (LVASLAVADLMVACLVMPLGAV). At 122-136 (YEVSQGWILGPELCD) the chain is on the extracellular side. Cys135 and Cys215 are oxidised to a cystine. The helical transmembrane segment at 137 to 158 (MWTSSDVLCSSASILHLVAIAT) threads the bilayer. The Cytoplasmic segment spans residues 159–177 (DRYWAVTDVDYIHIRNEKR). A helical transmembrane segment spans residues 178-200 (IFTMIVLVWGAALVVSLAPQLGW). Residues 201–228 (KDPDYLARITQQQKCLVSQDLAYQIFAT) are Extracellular-facing. A helical transmembrane segment spans residues 229–250 (MSTFYVPLAVILILYWKIFQTA). The Cytoplasmic portion of the chain corresponds to 251–386 (RRRIRRRRDP…AKRERKAAKT (136 aa)). Disordered regions lie at residues 255–282 (RRRR…QSAR) and 339–360 (VPPS…KPER). The span at 339-353 (VPPSVSPEKSSSTVT) shows a compositional bias: low complexity. Residues 387-410 (LAIITGAFVFCWLPFFIMALVMPI) form a helical membrane-spanning segment. The Extracellular portion of the chain corresponds to 411-419 (CQTCVISDY). Residues 420–442 (LASFFLWLGYFNSTLNPVIYTIF) traverse the membrane as a helical segment. The Cytoplasmic segment spans residues 443–466 (SPDFRQAFARILFGTHRRRRYKKF).

This sequence belongs to the G-protein coupled receptor 1 family.

It localises to the cell membrane. Functionally, this is a receptor for 5-hydroxytryptamine (serotonin), a biogenic hormone that function as a neurotransmitter, a hormone, and a mitogen. The chain is 5-hydroxytryptamine receptor from Heliothis virescens (Tobacco budworm moth).